Reading from the N-terminus, the 119-residue chain is Phosphoribosyl-AMP cyclohydrolase (119 aa).

D77 is a Mg(2+) binding site. C78 contributes to the Zn(2+) binding site. The Mg(2+) site is built by D79 and D81. 2 residues coordinate Zn(2+): C94 and C101.

It belongs to the PRA-CH family. As to quaternary structure, homodimer. Mg(2+) serves as cofactor. It depends on Zn(2+) as a cofactor.

It is found in the cytoplasm. The catalysed reaction is 1-(5-phospho-beta-D-ribosyl)-5'-AMP + H2O = 1-(5-phospho-beta-D-ribosyl)-5-[(5-phospho-beta-D-ribosylamino)methylideneamino]imidazole-4-carboxamide. Its pathway is amino-acid biosynthesis; L-histidine biosynthesis; L-histidine from 5-phospho-alpha-D-ribose 1-diphosphate: step 3/9. In terms of biological role, catalyzes the hydrolysis of the adenine ring of phosphoribosyl-AMP. This chain is Phosphoribosyl-AMP cyclohydrolase, found in Cereibacter sphaeroides (strain ATCC 17023 / DSM 158 / JCM 6121 / CCUG 31486 / LMG 2827 / NBRC 12203 / NCIMB 8253 / ATH 2.4.1.) (Rhodobacter sphaeroides).